The following is a 612-amino-acid chain: Dihydroxy-acid dehydratase (612 aa).

Aspartate 81 is a binding site for Mg(2+). Cysteine 122 contacts [2Fe-2S] cluster. Mg(2+) contacts are provided by aspartate 123 and lysine 124. Residue lysine 124 is modified to N6-carboxylysine. Position 195 (cysteine 195) interacts with [2Fe-2S] cluster. Glutamate 492 contacts Mg(2+). Serine 518 serves as the catalytic Proton acceptor.

The protein belongs to the IlvD/Edd family. Homodimer. The cofactor is [2Fe-2S] cluster. Mg(2+) is required as a cofactor.

The catalysed reaction is (2R)-2,3-dihydroxy-3-methylbutanoate = 3-methyl-2-oxobutanoate + H2O. It carries out the reaction (2R,3R)-2,3-dihydroxy-3-methylpentanoate = (S)-3-methyl-2-oxopentanoate + H2O. Its pathway is amino-acid biosynthesis; L-isoleucine biosynthesis; L-isoleucine from 2-oxobutanoate: step 3/4. The protein operates within amino-acid biosynthesis; L-valine biosynthesis; L-valine from pyruvate: step 3/4. Its function is as follows. Functions in the biosynthesis of branched-chain amino acids. Catalyzes the dehydration of (2R,3R)-2,3-dihydroxy-3-methylpentanoate (2,3-dihydroxy-3-methylvalerate) into 2-oxo-3-methylpentanoate (2-oxo-3-methylvalerate) and of (2R)-2,3-dihydroxy-3-methylbutanoate (2,3-dihydroxyisovalerate) into 2-oxo-3-methylbutanoate (2-oxoisovalerate), the penultimate precursor to L-isoleucine and L-valine, respectively. This chain is Dihydroxy-acid dehydratase, found in Kocuria rhizophila (strain ATCC 9341 / DSM 348 / NBRC 103217 / DC2201).